The following is a 614-amino-acid chain: Probable peptide-binding protein YejA (614 aa).

The signal sequence occupies residues 1–27; it reads MILAPLKSRILIALAASALLIPAVASA.

It belongs to the bacterial solute-binding protein 5 family. In terms of assembly, the complex is composed of one ATP-binding protein (YejF), two transmembrane proteins (YejB and YejE) and a solute-binding protein (YejA).

The protein localises to the periplasm. Functionally, probably part of the ABC transporter complex YejABEF, which is likely involved in broad-spectrum peptide import. This Agrobacterium fabrum (strain C58 / ATCC 33970) (Agrobacterium tumefaciens (strain C58)) protein is Probable peptide-binding protein YejA.